Reading from the N-terminus, the 117-residue chain is Large ribosomal subunit protein uL18 (117 aa).

It belongs to the universal ribosomal protein uL18 family. As to quaternary structure, part of the 50S ribosomal subunit; part of the 5S rRNA/L5/L18/L25 subcomplex. Contacts the 5S and 23S rRNAs.

This is one of the proteins that bind and probably mediate the attachment of the 5S RNA into the large ribosomal subunit, where it forms part of the central protuberance. This chain is Large ribosomal subunit protein uL18, found in Laribacter hongkongensis (strain HLHK9).